The following is a 159-amino-acid chain: GDP-mannose mannosyl hydrolase (159 aa).

Substrate-binding positions include 2–3 (FL), Phe8, and Arg36. Residues 13 to 153 (RSTPLVSLDF…SRAYFLAEKR (141 aa)) enclose the Nudix hydrolase domain. Residues Gly49, Glu69, and Gln122 each coordinate Mg(2+). Residues 50 to 71 (GRVQKDETLEAAFERLTMAELG) carry the Nudix box motif.

Belongs to the Nudix hydrolase family. Homodimer. Requires Mg(2+) as cofactor.

The enzyme catalyses GDP-alpha-D-mannose + H2O = D-mannose + GDP + H(+). Its function is as follows. Hydrolyzes GDP-mannose. This chain is GDP-mannose mannosyl hydrolase, found in Escherichia coli O157:H7.